A 171-amino-acid polypeptide reads, in one-letter code: Sigma intracellular receptor 2 (171 aa).

The Cytoplasmic segment spans residues 1 to 6 (MAVCAR). The helical transmembrane segment at 7–27 (LLEWIFFFYFFSHIPITLLVD) threads the bilayer. The EXPERA domain occupies 8 to 153 (LEWIFFFYFF…PYLLVPVLLL (146 aa)). Topologically, residues 28–66 (LQAVLPPSLYPQELLDLMKWYTVAFKDHLMANPPPWFKS) are lumenal. Residues 67–87 (FVYCEAILQLPFFPVAAYAFF) traverse the membrane as a helical segment. Cholesterol is bound by residues Ile73 and Gln75. Topologically, residues 88–97 (KGGCKWIRIP) are cytoplasmic. The chain crosses the membrane as a helical span at residues 98 to 118 (AIVYSAHVATTVIAIIGHILF). The Lumenal segment spans residues 119–137 (GEFPKSDVIAPLTQKDRLT). The helical transmembrane segment at 138–158 (LVSIYAPYLLVPVLLLLTMLF) threads the bilayer. Residues 159–171 (SPRYRQEEKRKRK) lie on the Cytoplasmic side of the membrane. Residues 167-171 (KRKRK) carry the ER retention motif motif.

The protein belongs to the TMEM97/sigma-2 receptor family. In terms of assembly, homodimer.

It localises to the rough endoplasmic reticulum membrane. Its subcellular location is the nucleus membrane. Functionally, sigma-2 receptor which contributes to ameliorate dysfunctional cellular processes and slow degenerative progression by regulating cell functions including cholesterol biosynthesis/trafficking, membrane trafficking, autophagy, lipid membrane-bound protein trafficking, and receptor stabilization at the cell surface. Forms a ternary complex with PGRMC1 receptor and low density lipoprotein receptor/LDLR at the plasma membrane, which increases LDLR-mediated LDL cholesterol internalization. Decreases lysosomal sterol transporter NPC1 availability to the cell, probably through NPC1-binding, hence controlling lipid transport, including cholesterol and LBPA, outside of late endosome/lysosome. Binds regio- and stereoselective ligand 20(S)-hydroxycholesterol (20(S)-OHC), thereby linking OHC binding to cholesterol homeostasis. Also able to bind cholesterol. Binds histatin 1 (Hst 1)/HN1 salivary peptide at the ER membrane, which is critical for increasing mitochondria-ER contacts and stimulating Hst1 wound healing properties. May alter the activity of some cytochrome P450 proteins. Although shows homologies with sterol isomerases (EXPERA domain), not able to catalyze sterol isomerization. However, may act as sensors of these molecules. Acts as a quality control factor in the ER, promoting the proteolytic degradation of nonproductive and extramitochondrial precursor proteins in the ER membrane thus removing them from the ER surface. The polypeptide is Sigma intracellular receptor 2 (tmem97) (Xenopus tropicalis (Western clawed frog)).